Consider the following 110-residue polypeptide: uncharacterized protein (110 aa).

A helical membrane pass occupies residues 18–34 (MFPLISTFTSIGLGVLM).

It is found in the membrane. This is an uncharacterized protein from Saccharomyces cerevisiae (strain ATCC 204508 / S288c) (Baker's yeast).